Here is a 425-residue protein sequence, read N- to C-terminus: D-amino acid dehydrogenase 2 (425 aa).

3–17 (ITVVGAGIVGISTAY) lines the FAD pocket.

The protein belongs to the DadA oxidoreductase family. It depends on FAD as a cofactor.

The enzyme catalyses a D-alpha-amino acid + A + H2O = a 2-oxocarboxylate + AH2 + NH4(+). Its function is as follows. Oxidative deamination of D-amino acids. The sequence is that of D-amino acid dehydrogenase 2 (dadA2) from Ralstonia nicotianae (strain ATCC BAA-1114 / GMI1000) (Ralstonia solanacearum).